The sequence spans 138 residues: Gonadotropin subunit beta-2 (138 aa).

A signal peptide spans 1-21 (MPASSYFLLFFFMNFFSPAQS). Disulfide bonds link Cys27–Cys75, Cys41–Cys90, Cys44–Cys128, Cys52–Cys106, Cys56–Cys108, and Cys111–Cys118. An N-linked (GlcNAc...) asparagine glycan is attached at Asn31.

This sequence belongs to the glycoprotein hormones subunit beta family. Heterodimer of an alpha and a beta chain.

It localises to the secreted. In terms of biological role, involved in gametogenesis and steroidogenesis. The sequence is that of Gonadotropin subunit beta-2 (cgbb) from Clarias gariepinus (North African catfish).